The sequence spans 825 residues: Glycerol-3-phosphate acyltransferase (825 aa).

An HXXXXD motif motif is present at residues 304-309; it reads CHRSHM. The interval 803-825 is disordered; it reads MPAETSNQPEAPETPEPEGKTES.

The protein belongs to the GPAT/DAPAT family.

The protein localises to the cell inner membrane. It carries out the reaction sn-glycerol 3-phosphate + an acyl-CoA = a 1-acyl-sn-glycero-3-phosphate + CoA. The protein operates within phospholipid metabolism; CDP-diacylglycerol biosynthesis; CDP-diacylglycerol from sn-glycerol 3-phosphate: step 1/3. The sequence is that of Glycerol-3-phosphate acyltransferase from Yersinia pseudotuberculosis serotype O:1b (strain IP 31758).